Here is a 201-residue protein sequence, read N- to C-terminus: Probable molybdenum cofactor guanylyltransferase (201 aa).

Residues 16–18 (LAG), Lys28, Asp75, and Asp107 each bind GTP. Asp107 is a binding site for Mg(2+).

This sequence belongs to the MobA family. Requires Mg(2+) as cofactor.

The protein localises to the cytoplasm. It carries out the reaction Mo-molybdopterin + GTP + H(+) = Mo-molybdopterin guanine dinucleotide + diphosphate. Transfers a GMP moiety from GTP to Mo-molybdopterin (Mo-MPT) cofactor (Moco or molybdenum cofactor) to form Mo-molybdopterin guanine dinucleotide (Mo-MGD) cofactor. This Mycobacterium bovis (strain ATCC BAA-935 / AF2122/97) protein is Probable molybdenum cofactor guanylyltransferase.